The primary structure comprises 508 residues: CUGBP Elav-like family member 2 (508 aa).

Necessary for RNA-binding, TNNT2 exon 5 and NMDA R1 exon 21 inclusion regions lie at residues Met1–Leu283 and Leu357–Tyr508. RRM domains follow at residues Ile40–Ser123, Arg132–Thr212, and Ala423–Ser501.

It belongs to the CELF/BRUNOL family. Interacts with A1CF. As to expression, expressed in tongue, spleen and brain (at protein level). Expressed in liver, thigh, stomach, lung and heart to very low levels (at protein level). Expressed in heart, brain, lung and muscle.

The protein resides in the nucleus. Its subcellular location is the cytoplasm. Functionally, RNA-binding protein implicated in the regulation of several post-transcriptional events. Involved in pre-mRNA alternative splicing, mRNA translation and stability. Mediates exon inclusion and/or exclusion in pre-mRNA that are subject to tissue-specific and developmentally regulated alternative splicing. Specifically activates exon 5 inclusion of TNNT2 in embryonic, but not adult, skeletal muscle. Activates TNNT2 exon 5 inclusion by antagonizing the repressive effect of PTB. Acts both as an activator and as a repressor of a pair of coregulated exons: promotes inclusion of the smooth muscle (SM) exon but exclusion of the non-muscle (NM) exon in actinin pre-mRNAs. Promotes inclusion of exonS 21 and exclusion of exon 5 of the NMDA receptor R1 pre-mRNA. Involved in the apoB RNA editing activity. Increases COX2 mRNA stability and inhibits COX2 mRNA translation in epithelial cells after radiation injury. Modulates the cellular apoptosis program by regulating COX2-mediated prostaglandin E2 (PGE2) expression. Binds to (CUG)n triplet repeats in the 3'-UTR of transcripts such as DMPK. Binds to the muscle-specific splicing enhancer (MSE) intronic sites flanking the TNNT2 alternative exon 5. Binds preferentially to UG-rich sequences, in particular UG repeat and UGUU motifs. Binds to apoB mRNA, specifically to AU-rich sequences located immediately upstream of the edited cytidine. Binds AU-rich sequences in the 3'-UTR of COX2 mRNA. Binds to an intronic RNA element responsible for the silencing of exon 21 splicing. Binds to (CUG)n repeats. May be a specific regulator of miRNA biogenesis. Binds to primary microRNA pri-MIR140 and, with CELF1, negatively regulates the processing to mature miRNA. This is CUGBP Elav-like family member 2 (Celf2) from Mus musculus (Mouse).